The primary structure comprises 191 residues: Leucyl/phenylalanyl-tRNA--protein transferase (191 aa).

It belongs to the L/F-transferase family.

The protein resides in the cytoplasm. The enzyme catalyses N-terminal L-lysyl-[protein] + L-leucyl-tRNA(Leu) = N-terminal L-leucyl-L-lysyl-[protein] + tRNA(Leu) + H(+). It catalyses the reaction N-terminal L-arginyl-[protein] + L-leucyl-tRNA(Leu) = N-terminal L-leucyl-L-arginyl-[protein] + tRNA(Leu) + H(+). It carries out the reaction L-phenylalanyl-tRNA(Phe) + an N-terminal L-alpha-aminoacyl-[protein] = an N-terminal L-phenylalanyl-L-alpha-aminoacyl-[protein] + tRNA(Phe). Functionally, functions in the N-end rule pathway of protein degradation where it conjugates Leu, Phe and, less efficiently, Met from aminoacyl-tRNAs to the N-termini of proteins containing an N-terminal arginine or lysine. This Trichormus variabilis (strain ATCC 29413 / PCC 7937) (Anabaena variabilis) protein is Leucyl/phenylalanyl-tRNA--protein transferase.